The chain runs to 256 residues: Thiazole synthase (256 aa).

Lys-96 (schiff-base intermediate with DXP) is an active-site residue. 1-deoxy-D-xylulose 5-phosphate is bound by residues Gly-157, 184-185, and 206-207; these read AG and NT.

This sequence belongs to the ThiG family. Homotetramer. Forms heterodimers with either ThiH or ThiS.

The protein resides in the cytoplasm. The catalysed reaction is [ThiS sulfur-carrier protein]-C-terminal-Gly-aminoethanethioate + 2-iminoacetate + 1-deoxy-D-xylulose 5-phosphate = [ThiS sulfur-carrier protein]-C-terminal Gly-Gly + 2-[(2R,5Z)-2-carboxy-4-methylthiazol-5(2H)-ylidene]ethyl phosphate + 2 H2O + H(+). It participates in cofactor biosynthesis; thiamine diphosphate biosynthesis. Its function is as follows. Catalyzes the rearrangement of 1-deoxy-D-xylulose 5-phosphate (DXP) to produce the thiazole phosphate moiety of thiamine. Sulfur is provided by the thiocarboxylate moiety of the carrier protein ThiS. In vitro, sulfur can be provided by H(2)S. This Bartonella tribocorum (strain CIP 105476 / IBS 506) protein is Thiazole synthase.